The following is a 167-amino-acid chain: Caffeine dehydrogenase subunit gamma (167 aa).

In terms of domain architecture, 2Fe-2S ferredoxin-type spans 4–80 (HVISLTVNGQ…GHSIRTVEAL (77 aa)). The [2Fe-2S] cluster site is built by Cys42, Cys47, Cys50, and Cys62.

In terms of assembly, heterotrimer composed of an alpha (CdhA), a beta (CdhB) and a gamma (CdhC) subunit.

The enzyme catalyses caffeine + a ubiquinone + H2O = 1,3,7-trimethylurate + a ubiquinol. It carries out the reaction ubiquinone-0 + caffeine + H2O = ubiquinol-0 + 1,3,7-trimethylurate. The catalysed reaction is theobromine + a ubiquinone + H2O = 3,7-dimethylurate + a ubiquinol. In terms of biological role, component of the caffeine dehydrogenase complex that catalyzes the hydrolytical oxidation of 1,3,7-trimethylxanthine (caffeine) by incorporation of an oxygen atom originating from a water molecule into position C-8 to produce 1,3,7-trimethyluric acid (TMU). Coenzyme Q0 (ubiquinone-0) is the preferred electron acceptor and, to a lesser extent, coenzyme Q2 (ubiquinone-2) can also be used, but oxygen and NAD(P)(+) cannot. Is involved in a caffeine degradation pathway that allows Pseudomonas sp. strain CBB1 to grow on caffeine as the sole carbon and nitrogen source. Is also active with theobromine as substrate, but shows a very poor activity with theophylline and is not active with xanthine, 3-methylxanthine, 7-methylxanthine, TMU, and 3,7-dimethylurate. The protein is Caffeine dehydrogenase subunit gamma of Pseudomonas sp. (strain CBB1).